Here is a 463-residue protein sequence, read N- to C-terminus: POU domain, class 2, transcription factor 2 (463 aa).

5 disordered regions span residues 1–87, 159–182, 259–282, 341–376, and 393–463; these read MVHS…QPHL, QPRA…EEPS, SSLP…GRRR, PCSA…LSQA, and TLHP…PYQP. Residues 12–37 are compositionally biased toward basic and acidic residues; sequence RMSKPLEAEKQSLDSPSEHTDTERNG. A compositionally biased stretch (polar residues) spans 41–60; that stretch reads NHQNPQNKASPFSVSPTGPS. Positions 75 to 85 are enriched in pro residues; that stretch reads AAPPPPQPAQP. The POU-specific domain occupies 179 to 253; sequence EEPSDLEELE…LLEKWLNDAE (75 aa). The segment covering 259–272 has biased composition (low complexity); that stretch reads SSLPSPNQLSSPSL. Positions 281–340 form a DNA-binding region, homeobox; it reads RRKKRTSIETNVRFALEKSFLANQKPTSEEILLIAEQLHMEKEVIRVWFCNRRQKEKRIN. The interval 373–394 is leucine-zipper; that stretch reads LSQASSSLSTTVTTLSSAVGTL. Gly residues predominate over residues 400–409; the sequence is AGGGGGGGGA.

This sequence belongs to the POU transcription factor family. Class-2 subfamily. As to quaternary structure, interacts with NR3C1, AR and PGR. Interacts with POU2AF1; the interaction increases POU2F2 transactivation activity. As to expression, highest in B cells, but also present in brain (neuronal and glial cells), intestine, kidney, and testes. In terms of tissue distribution, expressed at higher levels in B-cells than in neuronal cells. Expressed in neuronal cell lines and brain, but not dorsal root ganglia. As to expression, expressed at lower levels in neuronal cells than in B cells. In terms of tissue distribution, expressed in neuronal cell lines, and at lower levels in neuroblastoma and dorsal root ganglia. Widely expressed in the developing nervous system but expression is confined to very specific regions in the adult brain, it is expressed at a lower level in B cells. As to expression, either absent in, or expressed at very low levels in neuronal cells and brain. In terms of tissue distribution, expressed in all tissues tested: mammary gland, liver, spleen, lung, kidney intestine, uterus and ovary of a virgin mouse. Levels of isoform OCT2.7 are highest in spleen and lung. In mammary gland, expression is localized to the alveolus epithelial cells.

It localises to the cytoplasm. The protein localises to the nucleus. Its activity is regulated as follows. Transactivation activity is enhanced by transcriptional coactivator POU2AF1. Functionally, transcription factor that specifically binds to the octamer motif (5'-ATTTGCAT-3'). Regulates IL6 expression in B cells with POU2AF1. Regulates transcription in a number of tissues in addition to activating immunoglobulin gene expression. Modulates transcription transactivation by NR3C1, AR and PGR. In terms of biological role, activates octamer-containing promoters. Represses some promoters and activate others. Its function is as follows. Represses some promoters and activate others. Activates the U2 small nuclear RNA (snRNA) promoter. Functionally, unable to bind to the octamer motif, but can still activate the beta-casein gene promoter at low levels. The sequence is that of POU domain, class 2, transcription factor 2 from Mus musculus (Mouse).